Here is a 406-residue protein sequence, read N- to C-terminus: 2-epi-valiolone synthase (406 aa).

The interval 1 to 21 (MPSTGSTPILAHDVKSPHRGS) is disordered. NAD(+)-binding positions include 105–108 (EPSK), 137–141 (GVLCD), 161–162 (TS), K174, K183, and 201–204 (CLAT). 3 residues coordinate Zn(2+): E216, H287, and H304.

It belongs to the sugar phosphate cyclases superfamily. EVS family. Requires NAD(+) as cofactor. Co(2+) serves as cofactor. The cofactor is Zn(2+).

It catalyses the reaction D-sedoheptulose 7-phosphate = 2-epi-valiolone + phosphate. Its function is as follows. Catalyzes the conversion of sedoheptulose 7-phosphate to 2-epi-valiolone, which may serve as an alternative precursor for aminocyclitol biosynthesis. The sequence is that of 2-epi-valiolone synthase from Stigmatella aurantiaca (strain DW4/3-1).